Here is a 226-residue protein sequence, read N- to C-terminus: Thiamine-phosphate synthase (226 aa).

4-amino-2-methyl-5-(diphosphooxymethyl)pyrimidine-binding positions include 46–50 and Asn87; that span reads QLRDK. Residues Asp88 and Asp107 each contribute to the Mg(2+) site. Residue Ser126 coordinates 4-amino-2-methyl-5-(diphosphooxymethyl)pyrimidine. 152-154 is a binding site for 2-[(2R,5Z)-2-carboxy-4-methylthiazol-5(2H)-ylidene]ethyl phosphate; sequence TPT. A 4-amino-2-methyl-5-(diphosphooxymethyl)pyrimidine-binding site is contributed by Lys155. Residue Gly183 coordinates 2-[(2R,5Z)-2-carboxy-4-methylthiazol-5(2H)-ylidene]ethyl phosphate.

The protein belongs to the thiamine-phosphate synthase family. Mg(2+) serves as cofactor.

It carries out the reaction 2-[(2R,5Z)-2-carboxy-4-methylthiazol-5(2H)-ylidene]ethyl phosphate + 4-amino-2-methyl-5-(diphosphooxymethyl)pyrimidine + 2 H(+) = thiamine phosphate + CO2 + diphosphate. The enzyme catalyses 2-(2-carboxy-4-methylthiazol-5-yl)ethyl phosphate + 4-amino-2-methyl-5-(diphosphooxymethyl)pyrimidine + 2 H(+) = thiamine phosphate + CO2 + diphosphate. The catalysed reaction is 4-methyl-5-(2-phosphooxyethyl)-thiazole + 4-amino-2-methyl-5-(diphosphooxymethyl)pyrimidine + H(+) = thiamine phosphate + diphosphate. Its pathway is cofactor biosynthesis; thiamine diphosphate biosynthesis; thiamine phosphate from 4-amino-2-methyl-5-diphosphomethylpyrimidine and 4-methyl-5-(2-phosphoethyl)-thiazole: step 1/1. Functionally, condenses 4-methyl-5-(beta-hydroxyethyl)thiazole monophosphate (THZ-P) and 2-methyl-4-amino-5-hydroxymethyl pyrimidine pyrophosphate (HMP-PP) to form thiamine monophosphate (TMP). The sequence is that of Thiamine-phosphate synthase from Mycobacterium sp. (strain JLS).